The sequence spans 421 residues: UDP-N-acetylglucosamine 1-carboxyvinyltransferase (421 aa).

Lysine 22–asparagine 23 contacts phosphoenolpyruvate. A UDP-N-acetyl-alpha-D-glucosamine-binding site is contributed by arginine 92. Residue cysteine 116 is the Proton donor of the active site. Cysteine 116 carries the post-translational modification 2-(S-cysteinyl)pyruvic acid O-phosphothioketal. 2 residues coordinate UDP-N-acetyl-alpha-D-glucosamine: aspartate 307 and valine 329.

This sequence belongs to the EPSP synthase family. MurA subfamily.

It is found in the cytoplasm. The enzyme catalyses phosphoenolpyruvate + UDP-N-acetyl-alpha-D-glucosamine = UDP-N-acetyl-3-O-(1-carboxyvinyl)-alpha-D-glucosamine + phosphate. The protein operates within cell wall biogenesis; peptidoglycan biosynthesis. Cell wall formation. Adds enolpyruvyl to UDP-N-acetylglucosamine. This Kosmotoga olearia (strain ATCC BAA-1733 / DSM 21960 / TBF 19.5.1) protein is UDP-N-acetylglucosamine 1-carboxyvinyltransferase.